We begin with the raw amino-acid sequence, 366 residues long: NADH-quinone oxidoreductase subunit D (366 aa).

The protein belongs to the complex I 49 kDa subunit family. In terms of assembly, NDH-1 is composed of 14 different subunits. Subunits NuoB, C, D, E, F, and G constitute the peripheral sector of the complex.

It localises to the cell membrane. It catalyses the reaction a quinone + NADH + 5 H(+)(in) = a quinol + NAD(+) + 4 H(+)(out). NDH-1 shuttles electrons from NADH, via FMN and iron-sulfur (Fe-S) centers, to quinones in the respiratory chain. The immediate electron acceptor for the enzyme in this species is believed to be a menaquinone. Couples the redox reaction to proton translocation (for every two electrons transferred, four hydrogen ions are translocated across the cytoplasmic membrane), and thus conserves the redox energy in a proton gradient. The sequence is that of NADH-quinone oxidoreductase subunit D from Desulforamulus reducens (strain ATCC BAA-1160 / DSM 100696 / MI-1) (Desulfotomaculum reducens).